The following is a 198-amino-acid chain: Recombination protein RecR (198 aa).

A C4-type zinc finger spans residues 57-72 (CSVCGHITDKDPCYIC). Positions 80–175 (SVLCVVQESK…KVTRIAHGLP (96 aa)) constitute a Toprim domain.

Belongs to the RecR family.

Functionally, may play a role in DNA repair. It seems to be involved in an RecBC-independent recombinational process of DNA repair. It may act with RecF and RecO. The sequence is that of Recombination protein RecR from Listeria innocua serovar 6a (strain ATCC BAA-680 / CLIP 11262).